Here is a 70-residue protein sequence, read N- to C-terminus: Large ribosomal subunit protein bL31 (70 aa).

Positions 16, 18, 37, and 40 each coordinate Zn(2+).

It belongs to the bacterial ribosomal protein bL31 family. Type A subfamily. As to quaternary structure, part of the 50S ribosomal subunit. Zn(2+) serves as cofactor.

Functionally, binds the 23S rRNA. The sequence is that of Large ribosomal subunit protein bL31 from Shewanella sp. (strain MR-4).